Consider the following 310-residue polypeptide: Ornithine carbamoyltransferase (310 aa).

Carbamoyl phosphate-binding positions include 58–61, Gln-85, Arg-109, and 136–139; these read STRT and HPCQ. L-ornithine contacts are provided by residues Asn-167, Asp-227, and 231–232; that span reads SM. Carbamoyl phosphate-binding positions include 266-267 and Arg-294; that span reads CL.

It belongs to the aspartate/ornithine carbamoyltransferase superfamily. OTCase family.

It localises to the cytoplasm. It catalyses the reaction carbamoyl phosphate + L-ornithine = L-citrulline + phosphate + H(+). It participates in amino-acid biosynthesis; L-arginine biosynthesis; L-arginine from L-ornithine and carbamoyl phosphate: step 1/3. Its function is as follows. Reversibly catalyzes the transfer of the carbamoyl group from carbamoyl phosphate (CP) to the N(epsilon) atom of ornithine (ORN) to produce L-citrulline. The protein is Ornithine carbamoyltransferase of Rhodopseudomonas palustris (strain ATCC BAA-98 / CGA009).